Here is a 289-residue protein sequence, read N- to C-terminus: Light-independent protochlorophyllide reductase iron-sulfur ATP-binding protein (289 aa).

ATP contacts are provided by residues 10-15 (GIGKST) and Lys39. Ser14 contacts Mg(2+). Positions 95 and 129 each coordinate [4Fe-4S] cluster. 180-181 (NR) provides a ligand contact to ATP.

It belongs to the NifH/BchL/ChlL family. As to quaternary structure, homodimer. Protochlorophyllide reductase is composed of three subunits; ChlL, ChlN and ChlB. [4Fe-4S] cluster serves as cofactor.

It is found in the plastid. The protein localises to the chloroplast. The catalysed reaction is chlorophyllide a + oxidized 2[4Fe-4S]-[ferredoxin] + 2 ADP + 2 phosphate = protochlorophyllide a + reduced 2[4Fe-4S]-[ferredoxin] + 2 ATP + 2 H2O. Its pathway is porphyrin-containing compound metabolism; chlorophyll biosynthesis (light-independent). Component of the dark-operative protochlorophyllide reductase (DPOR) that uses Mg-ATP and reduced ferredoxin to reduce ring D of protochlorophyllide (Pchlide) to form chlorophyllide a (Chlide). This reaction is light-independent. The L component serves as a unique electron donor to the NB-component of the complex, and binds Mg-ATP. The polypeptide is Light-independent protochlorophyllide reductase iron-sulfur ATP-binding protein (Marchantia polymorpha (Common liverwort)).